The sequence spans 290 residues: uncharacterized protein (290 aa).

Disordered stretches follow at residues 89-157, 172-217, and 261-290; these read CSEN…EELS, MANT…MESS, and TANT…AVKK. 2 stretches are compositionally biased toward basic and acidic residues: residues 106 to 124 and 142 to 152; these read DFSK…EKQP and KTEKLVSKEPS. 2 stretches are compositionally biased toward polar residues: residues 172–183 and 193–202; these read MANTSSSANRTG and KPTTAVQAST. Composition is skewed to low complexity over residues 207-217 and 274-290; these read MSSAESAMESS and PSSE…AVKK.

This is an uncharacterized protein from Caenorhabditis elegans.